Reading from the N-terminus, the 354-residue chain is UDP-3-O-acylglucosamine N-acyltransferase (354 aa).

His247 acts as the Proton acceptor in catalysis.

It belongs to the transferase hexapeptide repeat family. LpxD subfamily. In terms of assembly, homotrimer.

It carries out the reaction a UDP-3-O-[(3R)-3-hydroxyacyl]-alpha-D-glucosamine + a (3R)-hydroxyacyl-[ACP] = a UDP-2-N,3-O-bis[(3R)-3-hydroxyacyl]-alpha-D-glucosamine + holo-[ACP] + H(+). It participates in bacterial outer membrane biogenesis; LPS lipid A biosynthesis. Catalyzes the N-acylation of UDP-3-O-acylglucosamine using 3-hydroxyacyl-ACP as the acyl donor. Is involved in the biosynthesis of lipid A, a phosphorylated glycolipid that anchors the lipopolysaccharide to the outer membrane of the cell. In Chlamydia trachomatis serovar A (strain ATCC VR-571B / DSM 19440 / HAR-13), this protein is UDP-3-O-acylglucosamine N-acyltransferase.